We begin with the raw amino-acid sequence, 751 residues long: Catalase-peroxidase (751 aa).

The signal sequence occupies residues 1 to 12 (MSNETKCPFSHA). Positions 91–241 (WHSAGTYRIG…LAAVQMGLIY (151 aa)) form a cross-link, tryptophyl-tyrosyl-methioninium (Trp-Tyr) (with M-267). His92 serves as the catalytic Proton acceptor. Positions 241–267 (YVNPEGPDGNPDPLAAAHDIRESFGRM) form a cross-link, tryptophyl-tyrosyl-methioninium (Tyr-Met) (with W-91). His282 lines the heme b pocket.

The protein belongs to the peroxidase family. Peroxidase/catalase subfamily. In terms of assembly, homodimer or homotetramer. It depends on heme b as a cofactor. Post-translationally, formation of the three residue Trp-Tyr-Met cross-link is important for the catalase, but not the peroxidase activity of the enzyme.

The enzyme catalyses H2O2 + AH2 = A + 2 H2O. It catalyses the reaction 2 H2O2 = O2 + 2 H2O. Bifunctional enzyme with both catalase and broad-spectrum peroxidase activity. In Cupriavidus necator (strain ATCC 17699 / DSM 428 / KCTC 22496 / NCIMB 10442 / H16 / Stanier 337) (Ralstonia eutropha), this protein is Catalase-peroxidase.